We begin with the raw amino-acid sequence, 499 residues long: MGIIDTRIPDSKRFISGVTGDWEVIIGMEVHAQIISNSKLFSGASTKFGAEPNNHVSLIDAAMPGMLPVINQECVRQAVRTGLGLKAHINLKSVFDRKNYFYPDLPQGYQISQFRYPVVGEGKITISIGPDPNGQFEDIEIGIERLHLEQDAGKSIHDQHPTMSFVDLNRSGVALMEIVSKPDMRSSDEAKAYMTKLRTIVRYLGTCDGNMDEGSMRADVNVSVRRPGENFGTRCEIKNVNSIRFIGQAIEYEARRQIAILEDGGVIDQETRLFDAAKGETRSMRSKEEAHDYRYFPDPDLLPLEFDQAFVDALAVELPELPDDIKARFINKMGLTPYDASILVAERAIADYFEEVACGRDGKMAANWVINDLLGALNKDNCAIEETPVAPSQLGAIIDLIKEGTISGKIAKDLFEIIWNEGGDPRQVVEERNMKQVTDIKAIERAVDEIVSNNSDKVAQAKQKPTLIGWFVGQVMKATGGKANPQTVNELVKVKLGID.

This sequence belongs to the GatB/GatE family. GatB subfamily. As to quaternary structure, heterotrimer of A, B and C subunits.

The enzyme catalyses L-glutamyl-tRNA(Gln) + L-glutamine + ATP + H2O = L-glutaminyl-tRNA(Gln) + L-glutamate + ADP + phosphate + H(+). It carries out the reaction L-aspartyl-tRNA(Asn) + L-glutamine + ATP + H2O = L-asparaginyl-tRNA(Asn) + L-glutamate + ADP + phosphate + 2 H(+). Its function is as follows. Allows the formation of correctly charged Asn-tRNA(Asn) or Gln-tRNA(Gln) through the transamidation of misacylated Asp-tRNA(Asn) or Glu-tRNA(Gln) in organisms which lack either or both of asparaginyl-tRNA or glutaminyl-tRNA synthetases. The reaction takes place in the presence of glutamine and ATP through an activated phospho-Asp-tRNA(Asn) or phospho-Glu-tRNA(Gln). The chain is Aspartyl/glutamyl-tRNA(Asn/Gln) amidotransferase subunit B from Bartonella quintana (strain Toulouse) (Rochalimaea quintana).